The following is a 156-amino-acid chain: MTKMNVESFNLDHTKVVAPFIRLAGTMEGLNGDVIHKYDIRFKQPNKEHMDMPGLHSLEHLMAENIRNHTDKVVDLSPMGCQTGFYVSFINHDDYDDVLNIIDQTLHDVLNASEVPACNEVQCGWAASHSLEGAKTIAQAFLDKREQWNDIYGEGK.

Fe cation is bound by residues His56, His60, and Cys123.

It belongs to the LuxS family. In terms of assembly, homodimer. It depends on Fe cation as a cofactor.

The enzyme catalyses S-(5-deoxy-D-ribos-5-yl)-L-homocysteine = (S)-4,5-dihydroxypentane-2,3-dione + L-homocysteine. Its function is as follows. Involved in the synthesis of autoinducer 2 (AI-2) which is secreted by bacteria and is used to communicate both the cell density and the metabolic potential of the environment. The regulation of gene expression in response to changes in cell density is called quorum sensing. Catalyzes the transformation of S-ribosylhomocysteine (RHC) to homocysteine (HC) and 4,5-dihydroxy-2,3-pentadione (DPD). In Staphylococcus epidermidis (strain ATCC 35984 / DSM 28319 / BCRC 17069 / CCUG 31568 / BM 3577 / RP62A), this protein is S-ribosylhomocysteine lyase.